A 364-amino-acid polypeptide reads, in one-letter code: tRNA 2-selenouridine synthase (364 aa).

In terms of domain architecture, Rhodanese spans 14–137 (LIADTPIIDV…LRQTAIQATI (124 aa)). Residue cysteine 97 is the S-selanylcysteine intermediate of the active site.

Belongs to the SelU family. As to quaternary structure, monomer.

The enzyme catalyses 5-methylaminomethyl-2-thiouridine(34) in tRNA + selenophosphate + (2E)-geranyl diphosphate + H2O + H(+) = 5-methylaminomethyl-2-selenouridine(34) in tRNA + (2E)-thiogeraniol + phosphate + diphosphate. The catalysed reaction is 5-methylaminomethyl-2-thiouridine(34) in tRNA + (2E)-geranyl diphosphate = 5-methylaminomethyl-S-(2E)-geranyl-thiouridine(34) in tRNA + diphosphate. It carries out the reaction 5-methylaminomethyl-S-(2E)-geranyl-thiouridine(34) in tRNA + selenophosphate + H(+) = 5-methylaminomethyl-2-(Se-phospho)selenouridine(34) in tRNA + (2E)-thiogeraniol. It catalyses the reaction 5-methylaminomethyl-2-(Se-phospho)selenouridine(34) in tRNA + H2O = 5-methylaminomethyl-2-selenouridine(34) in tRNA + phosphate. In terms of biological role, involved in the post-transcriptional modification of the uridine at the wobble position (U34) of tRNA(Lys), tRNA(Glu) and tRNA(Gln). Catalyzes the conversion of 2-thiouridine (S2U-RNA) to 2-selenouridine (Se2U-RNA). Acts in a two-step process involving geranylation of 2-thiouridine (S2U) to S-geranyl-2-thiouridine (geS2U) and subsequent selenation of the latter derivative to 2-selenouridine (Se2U) in the tRNA chain. In Escherichia coli O17:K52:H18 (strain UMN026 / ExPEC), this protein is tRNA 2-selenouridine synthase.